The sequence spans 104 residues: Ribonuclease P protein component 4 (104 aa).

Residues cysteine 63, cysteine 66, cysteine 89, and cysteine 92 each coordinate Zn(2+).

It belongs to the eukaryotic/archaeal RNase P protein component 4 family. In terms of assembly, consists of a catalytic RNA component and at least 4-5 protein subunits. The cofactor is Zn(2+).

Its subcellular location is the cytoplasm. It carries out the reaction Endonucleolytic cleavage of RNA, removing 5'-extranucleotides from tRNA precursor.. In terms of biological role, part of ribonuclease P, a protein complex that generates mature tRNA molecules by cleaving their 5'-ends. This chain is Ribonuclease P protein component 4, found in Methanosphaera stadtmanae (strain ATCC 43021 / DSM 3091 / JCM 11832 / MCB-3).